We begin with the raw amino-acid sequence, 286 residues long: Energy-coupling factor transporter ATP-binding protein EcfA2 (286 aa).

One can recognise an ABC transporter domain in the interval 3–245 (IKIENLTYTY…IDTLEKVGLA (243 aa)). Residue 40–47 (GHTGSGKS) participates in ATP binding.

It belongs to the ABC transporter superfamily. Energy-coupling factor EcfA family. As to quaternary structure, forms a stable energy-coupling factor (ECF) transporter complex composed of 2 membrane-embedded substrate-binding proteins (S component), 2 ATP-binding proteins (A component) and 2 transmembrane proteins (T component).

The protein localises to the cell membrane. ATP-binding (A) component of a common energy-coupling factor (ECF) ABC-transporter complex. Unlike classic ABC transporters this ECF transporter provides the energy necessary to transport a number of different substrates. The chain is Energy-coupling factor transporter ATP-binding protein EcfA2 from Clostridium acetobutylicum (strain ATCC 824 / DSM 792 / JCM 1419 / IAM 19013 / LMG 5710 / NBRC 13948 / NRRL B-527 / VKM B-1787 / 2291 / W).